The sequence spans 311 residues: MSKTLNILELTSACIKLAQESGDIIRDVFKSGSLGIEMKSVDDPMTKADLLSQQHIIGSLRTIWSDIKIVGEEQCEIPTIDKKPPIDLLANDKDCIEKCPEEFKQLPIDDLIIFIDPLDATREFTLGRVGCVMTLIGISFKGKPIAGIIYQPFVDCNGDGTTDQSKWVGRTIWAIVGGGIPVKGIKDRRAPEDVGKVILTTTASHFNDKVQQAVDAIKPDKLLRAGGAGYKSLLVIENQADVYVFPTVGSKLWDICGPHAILLAVGGKLTDPQGNDIIYSTDPEKIENKNGIIITISNHQKYIDLLKNFKN.

Asp-49 functions as the Proton acceptor in the catalytic mechanism. Mg(2+) is bound by residues Glu-72, Asp-116, Leu-118, and Asp-119. Thr-121 acts as the Proton acceptor in catalysis. AMP-binding residues include Thr-202, His-205, Gly-227, and Lys-231. Asp-254 is a Mg(2+) binding site.

It belongs to the inositol monophosphatase superfamily. It depends on Mg(2+) as a cofactor.

The enzyme catalyses adenosine 3',5'-bisphosphate + H2O = AMP + phosphate. It catalyses the reaction adenosine 2',5'-bisphosphate + H2O = AMP + phosphate. It carries out the reaction 3'-phosphoadenylyl sulfate + H2O = adenosine 5'-phosphosulfate + phosphate. The catalysed reaction is 1D-myo-inositol 1,4-bisphosphate + H2O = 1D-myo-inositol 4-phosphate + phosphate. The enzyme catalyses 1D-myo-inositol 1,3,4-trisphosphate + H2O = 1D-myo-inositol 3,4-bisphosphate + phosphate. With respect to regulation, inhibited by Li(+) and Ca(2+), but not by Na(+). Its function is as follows. Phosphatase that converts 3'(2')-phosphoadenosine 5'-phosphate (PAP) to AMP and adenosine 3'-phosphate 5'-phosphosulfate (PAPS) to adenosine 5'-phosphosulfate (APS). Is also able to hydrolyze inositol 1,4-bisphosphate (Ins(1,4)P2) and inositol 1,3,4-trisphosphate (Ins(1,3,4)P3), but is not active on AMP, 3'-AMP, fructose-1,6-bisphosphate, Ins(1)P, Ins(2)P and Ins(1,4,5)P3. Probably prevents the toxic accumulation of PAP, a compound which inhibits a variety of proteins, including PAPS-utilizing enzymes such as sulfotransferases, and RNA processing enzymes. Could also play a role in inositol recycling and phosphoinositide metabolism. The sequence is that of 3'(2'),5'-bisphosphate nucleotidase 1 (bpnt1) from Dictyostelium discoideum (Social amoeba).